The chain runs to 157 residues: Monooxygenase CPUR_05417 (157 aa).

Belongs to the avfA family.

The protein operates within secondary metabolite biosynthesis. Monooxygenase; part of the ergochrome gene cluster responsible for the typical purple-black color of the ergot sclerotia. The ergochrome gene cluster produces several ergot pigments including the yellow ergochrome secalonic acid and its derivatives, as well as the red anthraquinones endocrocin and clavorubin. The pathway begins with the synthesis of atrochrysone thioester by the polyketide synthase (PKS) CPUR_05437. The atrochrysone carboxyl ACP thioesterase CPUR_05436 then breaks the thioester bond and releases the atrochrysone carboxylic acid from CPUR_05437. The atrochrysone carboxylic acid is then converted to atrochrysone which is further transformed into emodin anthrone. The next step is performed by the anthrone oxygenase CPUR_05434 that catalyzes the oxidation of emodinanthrone to emodin. Emodin is further modified to yield monodictyphenone via several steps involving CPUR_05427, CPUR_05428, CPUR_05429 and CPUR_05430. The short chain dehydrogenase/reductase CPUR_05418 then catalyzes the C-5 ketoreduction to give the xanthone skeleton of the monomeric units. Ergochromes formation requires further dimerization steps of different xanthone units, probably catalyzed by the cytochrome P450 monooxygenase CPUR_05419. CPUR_05425, CPUR_05426 and CPUR_05431 are unique to Claviceps, thus it is likely that they are involved in further modification of xanthone units or in their dimerization. The yellow ergochromes and the red anthraquinone pigments endocrocin and clavorubin are products from the same PKS derived precursors and the latter are likely shunt products in the pathway of xanthone biosynthesis. It is proposed that atrochrysone carboxylic acid released from the PKS CPUR_05437 can also be converted to endocrocin anthrone which is further oxidized into endocrocin by CPUR_05435. Endocrocin could be then modified to clavorubin, possibly by CPUR_05423 and CPUR_05431. Clavorubin is the principal anthraquinone metabolite produced by the cluster with a much higher yield compared to endocrocin. This is Monooxygenase CPUR_05417 from Claviceps purpurea (strain 20.1) (Ergot fungus).